A 206-amino-acid polypeptide reads, in one-letter code: Probable GTP-binding protein EngB (206 aa).

One can recognise an EngB-type G domain in the interval 23–197; it reads QGIEVAFAGR…ERVLDKWFGY (175 aa). GTP contacts are provided by residues 31–38, 58–62, 76–79, 143–146, and 176–178; these read GRSNAGKS, GRTQL, DLPG, TKAD, and FSS. 2 residues coordinate Mg(2+): S38 and T60.

This sequence belongs to the TRAFAC class TrmE-Era-EngA-EngB-Septin-like GTPase superfamily. EngB GTPase family. The cofactor is Mg(2+).

Functionally, necessary for normal cell division and for the maintenance of normal septation. In Pseudoalteromonas atlantica (strain T6c / ATCC BAA-1087), this protein is Probable GTP-binding protein EngB.